The sequence spans 334 residues: Fructose-1,6-bisphosphatase class 1 (334 aa).

Glu-90, Asp-113, Leu-115, and Asp-116 together coordinate Mg(2+). Residues 116–119 (DGSS), Asn-209, Tyr-242, and Lys-272 contribute to the substrate site. Glu-278 contacts Mg(2+).

The protein belongs to the FBPase class 1 family. Homotetramer. It depends on Mg(2+) as a cofactor.

It localises to the cytoplasm. The catalysed reaction is beta-D-fructose 1,6-bisphosphate + H2O = beta-D-fructose 6-phosphate + phosphate. It participates in carbohydrate biosynthesis; gluconeogenesis. The chain is Fructose-1,6-bisphosphatase class 1 from Actinobacillus succinogenes (strain ATCC 55618 / DSM 22257 / CCUG 43843 / 130Z).